Here is a 449-residue protein sequence, read N- to C-terminus: Sulfite exporter TauE/SafE family protein 5 (449 aa).

A run of 12 helical transmembrane segments spans residues 1–21 (MKTL…NANQ), 57–77 (AIIM…AGGI), 78–98 (GGGG…LKTA), 101–121 (FSAF…LFGG), 127–147 (YDLA…GVIC), 150–170 (VLPE…SSLK), 224–244 (IPWT…VIYL), 259–279 (PCGV…LIFT), 315–335 (AMSF…GMLI), 353–373 (TSFM…LLGM), 378–398 (TAYV…VLVQ), and 409–429 (IIVF…TSFG).

This sequence belongs to the 4-toluene sulfonate uptake permease (TSUP) (TC 2.A.102) family.

It localises to the membrane. This chain is Sulfite exporter TauE/SafE family protein 5, found in Arabidopsis thaliana (Mouse-ear cress).